Consider the following 711-residue polypeptide: Hydroperoxide isomerase ALOXE3 (711 aa).

One can recognise a PLAT domain in the interval 2–119 (AVYRLCVTTG…TVELRPGTAR (118 aa)). One can recognise a Lipoxygenase domain in the interval 120-711 (TICQDSLPLL…PPLIENSVSI (592 aa)). Fe cation-binding residues include H408, H413, H588, N592, and I711.

It belongs to the lipoxygenase family. Fe cation is required as a cofactor. In terms of tissue distribution, skin specific.

It is found in the cytoplasm. It catalyses the reaction a hydroperoxyeicosatetraenoate = a hydroxy-epoxy-eicosatetraenoate. The catalysed reaction is (8S)-hydroperoxy-(5Z,9E,11Z,14Z)-eicosatetraenoate = (10R)-hydroxy-(8S,9S)-epoxy-(5Z,11Z,14Z)-eicosatrienoate. It carries out the reaction (12R)-hydroperoxy-(5Z,8Z,10E,14Z)-eicosatetraenoate = (8R)-hydroxy-(11R,12R)-epoxy-(5Z,9E,14Z)-eicosatrienoate. The enzyme catalyses (12S)-hydroperoxy-(5Z,8Z,10E,14Z)-eicosatetraenoate = (8R)-hydroxy-(11S,12S)-epoxy-(5Z,9E,14Z)-eicosatrienoate. It catalyses the reaction (12S)-hydroperoxy-(5Z,8Z,10E,14Z)-eicosatetraenoate = (10R)-hydroxy-(11S,12S)-epoxy-(5Z,8Z,14Z)-eicosatrienoate. The catalysed reaction is (15S)-hydroperoxy-(5Z,8Z,11Z,13E)-eicosatetraenoate = (13R)-hydroxy-(14S,15S)-epoxy-(5Z,8Z,11Z)-eicosatrienoate. It carries out the reaction (13S)-hydroperoxy-(9Z,11E)-octadecadienoate = 11-hydroxy-(12S,13S)-epoxy-(9Z)-octadecenoate. The enzyme catalyses (5S)-hydroperoxy-(6E,8Z,11Z,14Z)-eicosatetraenoate = 7R-hydroxy-5S,6S-epoxy-(8Z,11Z,14Z)-eicosatrienoate. It catalyses the reaction N-[omega-(9R)-hydroperoxy-(10E,12Z)-octadecadienoyloxy]acyl-beta-D-glucosyl-(1&lt;-&gt;1)-octadecasphing-4E-enine = a N-[omega-(9R,10R)-epoxy-(13R)-hydroxy-(11E)-octadecenoyloxy]acyl-beta-D-glucosyl-(1&lt;-&gt;1)-sphing-4E-enine. The catalysed reaction is a N-[omega-(9R)-hydroperoxy-(10E,12Z)-octadecadienoyloxy]-acylsphin-4E-enine = a N-[omega-(9R,10R)-epoxy-(13R)-hydroxy-(11E)-octadecenoyloxy]-acylsphing-4E-enine. It carries out the reaction a hydroperoxyeicosatetraenoate = an oxoeicosatetraenoate + H2O. The enzyme catalyses (8R)-hydroperoxy-(5Z,9E,11Z,14Z)-eicosatetraenoate = 8-oxo-(5Z,9E,11Z,14Z)-eicosatetraenoate + H2O. It catalyses the reaction (8S)-hydroperoxy-(5Z,9E,11Z,14Z)-eicosatetraenoate = 8-oxo-(5Z,9E,11Z,14Z)-eicosatetraenoate + H2O. The catalysed reaction is (12R)-hydroperoxy-(5Z,8Z,10E,14Z)-eicosatetraenoate = 12-oxo-(5Z,8Z,10E,14Z)-eicosatetraenoate + H2O. It carries out the reaction (12S)-hydroperoxy-(5Z,8Z,10E,14Z)-eicosatetraenoate = 12-oxo-(5Z,8Z,10E,14Z)-eicosatetraenoate + H2O. The enzyme catalyses (15S)-hydroperoxy-(5Z,8Z,11Z,13E)-eicosatetraenoate = 15-oxo-(5Z,8Z,11Z,13E)-eicosatetraenoate + H2O. It catalyses the reaction (13S)-hydroperoxy-(9Z,11E)-octadecadienoate = 13-oxo-(9Z,11E)-octadecadienoate + H2O. Its pathway is lipid metabolism; hydroperoxy eicosatetraenoic acid biosynthesis. It participates in lipid metabolism; sphingolipid metabolism. Non-heme iron-containing lipoxygenase which is atypical in that it displays a prominent hydroperoxide isomerase activity and a reduced lipoxygenases activity. The hydroperoxide isomerase activity catalyzes the isomerization of hydroperoxides, derived from arachidonic and linoleic acid by ALOX12B, into hepoxilin-type epoxyalcohols and ketones. In presence of oxygen, oxygenates polyunsaturated fatty acids, including arachidonic acid, to produce fatty acid hydroperoxides. In the skin, acts downstream of ALOX12B on the linoleate moiety of esterified omega-hydroxyacyl-sphingosine (EOS) ceramides to produce an epoxy-ketone derivative, a crucial step in the conjugation of omega-hydroxyceramide to membrane proteins. Therefore plays a crucial role in the synthesis of corneocytes lipid envelope and the establishment of the skin barrier to water loss. In parallel, it may have a signaling function in barrier formation through the production of hepoxilins metabolites. Also plays a role in adipocyte differentiation through hepoxilin A3 and hepoxilin B3 production which in turn activate PPARG. Through the production of hepoxilins in the spinal cord, it may regulate inflammatory tactile allodynia. This chain is Hydroperoxide isomerase ALOXE3, found in Mus musculus (Mouse).